The following is a 106-amino-acid chain: MVREFYVTGRGRKLLPTVFRIKSFHGIVRQCVKQQRDFTSFLASSPAMGVAQGQQVKLILMLLIETWETKHQSCHSHFILLEFTHLFVRKFSQIFFEFRLFAHLLS.

This is an uncharacterized protein from Schizosaccharomyces pombe (strain 972 / ATCC 24843) (Fission yeast).